The chain runs to 132 residues: MSIITDPIADMLTRIKNATKRKHKSVNIPFSNKKLKIVEIIKKEGYISGYEIVGQGIEKKILITLKYKGNTSAIFDLKRISKPGLRVYTTASNIPSVLSGYGIAIISTSKGILTDKEARKENVGGEVIAYIW.

This sequence belongs to the universal ribosomal protein uS8 family. In terms of assembly, part of the 30S ribosomal subunit. Contacts proteins S5 and S12.

In terms of biological role, one of the primary rRNA binding proteins, it binds directly to 16S rRNA central domain where it helps coordinate assembly of the platform of the 30S subunit. The chain is Small ribosomal subunit protein uS8 from Mycoplasmopsis pulmonis (strain UAB CTIP) (Mycoplasma pulmonis).